We begin with the raw amino-acid sequence, 188 residues long: MFDQHKIEKAVRLILEAIGENPEREGLKGTPARVARMYEEIFSGLQEDPEEHLQKIFSEEHEEMVIVKDIPLYSICEHHLLPFYGKAHVAYIPRKGKVTGLSKLARVVEGFAKRPQLQERLTSQIADTIMRRLNPIGVLVVIEAEHMCMTFRGVKKPGSKTVTSAVRGLFRKNVATRAEAFSLIKGQA.

Positions 76, 79, and 148 each coordinate Zn(2+).

It belongs to the GTP cyclohydrolase I family. In terms of assembly, homomer.

It catalyses the reaction GTP + H2O = 7,8-dihydroneopterin 3'-triphosphate + formate + H(+). It participates in cofactor biosynthesis; 7,8-dihydroneopterin triphosphate biosynthesis; 7,8-dihydroneopterin triphosphate from GTP: step 1/1. The chain is GTP cyclohydrolase 1 from Pelotomaculum thermopropionicum (strain DSM 13744 / JCM 10971 / SI).